The following is a 493-amino-acid chain: 3-octaprenyl-4-hydroxybenzoate carboxy-lyase (493 aa).

Asn-172 provides a ligand contact to Mn(2+). Residues 175–177 (IYR), 189–191 (RWL), and 194–195 (RG) contribute to the prenylated FMN site. Mn(2+) is bound at residue Glu-238. Asp-287 serves as the catalytic Proton donor.

This sequence belongs to the UbiD family. Homohexamer. Requires prenylated FMN as cofactor. The cofactor is Mn(2+).

It is found in the cell membrane. The enzyme catalyses a 4-hydroxy-3-(all-trans-polyprenyl)benzoate + H(+) = a 2-(all-trans-polyprenyl)phenol + CO2. It participates in cofactor biosynthesis; ubiquinone biosynthesis. In terms of biological role, catalyzes the decarboxylation of 3-octaprenyl-4-hydroxy benzoate to 2-octaprenylphenol, an intermediate step in ubiquinone biosynthesis. The protein is 3-octaprenyl-4-hydroxybenzoate carboxy-lyase of Shewanella loihica (strain ATCC BAA-1088 / PV-4).